Here is a 358-residue protein sequence, read N- to C-terminus: Trace amine-associated receptor 7a (358 aa).

At 1 to 47 (MDKLVDNFLSGQSRTMSEDLLSASSPQLCYENLNGSCIRSPYSPGPR) the chain is on the extracellular side. Residue asparagine 34 is glycosylated (N-linked (GlcNAc...) asparagine). Cystine bridges form between cysteine 37–cysteine 201 and cysteine 120–cysteine 205. Residues 48-68 (LILYAVFGFGAVLAVCGNLLV) traverse the membrane as a helical segment. At 69–83 (MTSILHFRQLHSPAN) the chain is on the cytoplasmic side. Residues 84-104 (FLVASLACADFLVGLTVMPFS) form a helical membrane-spanning segment. The Extracellular segment spans residues 105 to 121 (TVRSVEGCWYFGDTYCK). Residues 122-143 (FHSCFEGSFCYSSIFHLCFISV) traverse the membrane as a helical segment. Residues 144 to 166 (DRYIAVSDPLIYPTRFTASVSGK) are Cytoplasmic-facing. The helical transmembrane segment at 167 to 187 (CITFSWLLSIIYSFSLLYTGA) threads the bilayer. At 188–212 (NEAGLEDLVSALTCVGGCQIAVNQS) the chain is on the extracellular side. Residue asparagine 210 is glycosylated (N-linked (GlcNAc...) asparagine). A helical transmembrane segment spans residues 213-233 (WVFINFLLFLVPTLVMMTVYS). The Cytoplasmic portion of the chain corresponds to 234–274 (KIFLIAKQQAQNIEKMSKQTTRASESYKDRVAKRERKAAKT). A helical transmembrane segment spans residues 275-295 (LGIAVAAFLLSWLPYFIDSII). Residues 296-309 (DAFLGFITPTYVYE) lie on the Extracellular side of the membrane. Residues 310-333 (ILVWIAYYNSAMNPLIYAFFYPWF) form a helical membrane-spanning segment. The Cytoplasmic segment spans residues 334 to 358 (RKAIKLIVTGKILRQNSSVTNLFPE).

It belongs to the G-protein coupled receptor 1 family.

It localises to the cell membrane. Its function is as follows. Olfactory receptor specific for N,N-dimethylalkylamines trace amines. Trace amine compounds are enriched in animal body fluids and act on trace amine-associated receptors (TAARs) to elicit both intraspecific and interspecific innate behaviors. Ligand-binding causes a conformation change that triggers signaling via G(s)-class of G alpha proteins (GNAL or GNAS). The chain is Trace amine-associated receptor 7a from Rattus norvegicus (Rat).